A 545-amino-acid polypeptide reads, in one-letter code: Chaperonin GroEL (545 aa).

ATP is bound by residues 30–33 (TLGP), K51, 87–91 (DGTTT), G415, and D496. A disordered region spans residues 526 to 545 (PEPKAPAGGMPDMGGMGGMM). Over residues 536–545 (PDMGGMGGMM) the composition is skewed to gly residues.

Belongs to the chaperonin (HSP60) family. In terms of assembly, forms a cylinder of 14 subunits composed of two heptameric rings stacked back-to-back. Interacts with the co-chaperonin GroES.

The protein localises to the cytoplasm. It carries out the reaction ATP + H2O + a folded polypeptide = ADP + phosphate + an unfolded polypeptide.. Functionally, together with its co-chaperonin GroES, plays an essential role in assisting protein folding. The GroEL-GroES system forms a nano-cage that allows encapsulation of the non-native substrate proteins and provides a physical environment optimized to promote and accelerate protein folding. The chain is Chaperonin GroEL from Paracoccus denitrificans (strain Pd 1222).